Here is a 425-residue protein sequence, read N- to C-terminus: UPF0761 membrane protein XCV0968 (425 aa).

The next 6 helical transmembrane spans lie at 48-68 (VFAL…FPAF), 105-125 (FTVA…HSIE), 154-174 (GTML…LPLF), 182-202 (LAEF…IVLI), 216-236 (ALPG…GFGF), and 250-270 (ALSA…SVLL).

This sequence belongs to the UPF0761 family.

The protein localises to the cell inner membrane. This is UPF0761 membrane protein XCV0968 from Xanthomonas euvesicatoria pv. vesicatoria (strain 85-10) (Xanthomonas campestris pv. vesicatoria).